We begin with the raw amino-acid sequence, 791 residues long: Phenylalanine--tRNA ligase beta subunit (791 aa).

A tRNA-binding domain is found at Gly-39–Lys-149. In terms of domain architecture, B5 spans Ile-403 to Thr-478. Asp-456, Asp-462, Glu-465, and Glu-466 together coordinate Mg(2+). Residues Pro-698 to Arg-791 form the FDX-ACB domain.

It belongs to the phenylalanyl-tRNA synthetase beta subunit family. Type 1 subfamily. As to quaternary structure, tetramer of two alpha and two beta subunits. Mg(2+) is required as a cofactor.

It localises to the cytoplasm. It catalyses the reaction tRNA(Phe) + L-phenylalanine + ATP = L-phenylalanyl-tRNA(Phe) + AMP + diphosphate + H(+). The protein is Phenylalanine--tRNA ligase beta subunit of Clostridium tetani (strain Massachusetts / E88).